The sequence spans 241 residues: IVLHGRAWGELYVARQAGQPVFDRADADFATVLAAVVASGIAQTERLEEVRKLAFTDPLTGLANRRAVDVRLDEAMERHRVDATVVSLVVCDLNGLKAVNDTHGHAVGDRLLERFGSVLSLCGAMLPEALAARLGGDEFCLLTAGPPADAVVGVATELCDRAAVIELGDGVACGVASTGDPIGPVRSARRLFRLADAAQYRAKAARAPGPVVAGRDGEVVRLADSPPKSAHDRRRLRGNRP.

The GGDEF domain maps to 84–216; the sequence is TVVSLVVCDL…APGPVVAGRD (133 aa). A disordered region spans residues 215–241; the sequence is RDGEVVRLADSPPKSAHDRRRLRGNRP. A compositionally biased stretch (basic residues) spans 231–241; it reads HDRRRLRGNRP.

This is an uncharacterized protein from Streptomyces griseus.